Reading from the N-terminus, the 459-residue chain is Serine/threonine-protein kinase 12 (459 aa).

The disordered stretch occupies residues 1 to 30 (MEEDYQQPRFTIGRQSSMAPEKIPEPSVHS). ANK repeat units follow at residues 42-71 (DGGVRLMYLANEGDIEGIKELIDSGIDANY), 75-104 (DDRTALHVAACQGLKDVVELLLDRKAEVDP), and 108-137 (WGSTPFADAIFYKNIDVIKILEIHGAKHPM). A Protein kinase domain is found at 102–417 (VDPKDRWGST…EIIKRLESIL (316 aa)). Residues 108-116 (WGSTPFADA) and Lys184 each bind ATP. Asp281 (proton acceptor) is an active-site residue.

This sequence belongs to the protein kinase superfamily. Ser/Thr protein kinase family. In terms of assembly, interacts with BLUS1, PHOT1 and PHOT2. As to expression, accumulates in leaves, stems, petioles and roots, especially in guard cells.

It localises to the cytoplasm. It is found in the cytosol. The enzyme catalyses L-seryl-[protein] + ATP = O-phospho-L-seryl-[protein] + ADP + H(+). The catalysed reaction is L-threonyl-[protein] + ATP = O-phospho-L-threonyl-[protein] + ADP + H(+). Its function is as follows. Serine/threonine protein kinase that phosphorylates proteins on serine and threonine residues. Mediates blue light-dependent stomatal opening in guard cells by promoting plasma membrane-type ATPases (AHA1 and AHA2) phosphorylation. In Arabidopsis thaliana (Mouse-ear cress), this protein is Serine/threonine-protein kinase 12.